Consider the following 293-residue polypeptide: Epidermal growth factor-like protein 8 (293 aa).

The signal sequence occupies residues 1–25; it reads MGSRAELCTLLGGFSFLLLLIPGEG. Residues 34-112 form the EMI domain; it reads SQGVCSKQTL…RHPGALTCEA (79 aa). 9 cysteine pairs are disulfide-bonded: Cys38–Cys97, Cys65–Cys71, Cys96–Cys110, Cys114–Cys124, Cys118–Cys130, Cys132–Cys141, Cys148–Cys159, Cys155–Cys168, and Cys170–Cys183. A glycan (N-linked (GlcNAc...) asparagine) is linked at Asn50. The region spanning 111–142 is the EGF-like 1 domain; the sequence is EAICAKPCLNGGVCVRPDQCECAPGWGGKHCH. One can recognise an EGF-like 2; calcium-binding domain in the interval 144–184; it reads DVDECRTSITLCSHHCFNTAGSFTCGCPHDLVLGVDGRTCM. Residues 195 to 232 adopt a coiled-coil conformation; that stretch reads SILSVAVREAEKDERALKQEIHELRGRLERLEQWAGQA.

The protein localises to the secreted. In Homo sapiens (Human), this protein is Epidermal growth factor-like protein 8 (EGFL8).